The sequence spans 241 residues: Glucosamine-6-phosphate deaminase (241 aa).

The Proton acceptor; for enolization step role is filled by Asp-67. Asn-136 (for ring-opening step) is an active-site residue. Catalysis depends on His-138, which acts as the Proton acceptor; for ring-opening step. Glu-143 serves as the catalytic For ring-opening step.

Belongs to the glucosamine/galactosamine-6-phosphate isomerase family. NagB subfamily.

The catalysed reaction is alpha-D-glucosamine 6-phosphate + H2O = beta-D-fructose 6-phosphate + NH4(+). It participates in amino-sugar metabolism; N-acetylneuraminate degradation; D-fructose 6-phosphate from N-acetylneuraminate: step 5/5. Its function is as follows. Catalyzes the reversible isomerization-deamination of glucosamine 6-phosphate (GlcN6P) to form fructose 6-phosphate (Fru6P) and ammonium ion. The protein is Glucosamine-6-phosphate deaminase of Clostridium tetani (strain Massachusetts / E88).